The following is a 403-amino-acid chain: Phosphoglycerate kinase (403 aa).

Residues 24 to 26 (DLN), R39, 62 to 65 (HLGR), R121, and R161 each bind substrate. Residues K211, G299, E330, and 359-362 (GGDS) contribute to the ATP site.

This sequence belongs to the phosphoglycerate kinase family. In terms of assembly, monomer.

It localises to the cytoplasm. It catalyses the reaction (2R)-3-phosphoglycerate + ATP = (2R)-3-phospho-glyceroyl phosphate + ADP. It functions in the pathway carbohydrate degradation; glycolysis; pyruvate from D-glyceraldehyde 3-phosphate: step 2/5. In Rhodococcus erythropolis (strain PR4 / NBRC 100887), this protein is Phosphoglycerate kinase.